Here is a 380-residue protein sequence, read N- to C-terminus: Zinc finger protein neuro-d4 (380 aa).

The interval 132 to 164 (ALLDCQKPPPGDFAHDAEGDEMEDDAPRRKNKA) is disordered. The C2H2-type zinc finger occupies 190 to 213 (YVCDICGKRYKNRPGLSYHYTHTH). PHD-type zinc fingers lie at residues 262–321 (EGPC…CKNC) and 318–368 (CKNC…CLRQ). Residues cysteine 265, cysteine 268, cysteine 286, cysteine 289, histidine 294, cysteine 297, cysteine 315, cysteine 318, cysteine 321, cysteine 324, cysteine 336, cysteine 339, histidine 344, cysteine 347, cysteine 362, and cysteine 365 each contribute to the Zn(2+) site.

Belongs to the requiem/DPF family. As to quaternary structure, component of neuron-specific chromatin remodeling complex (nBAF complex), a subfamily of ATP-dependent SWI/SNF chromatin remodeling complexes.

The protein resides in the cytoplasm. The protein localises to the nucleus. In terms of biological role, may have an important role in developing neurons by participating in regulation of cell survival, possibly as a neurospecific transcription factor. Belongs to the neuron-specific chromatin remodeling complex (nBAF complex) and plays a role in neural development. The sequence is that of Zinc finger protein neuro-d4 from Gallus gallus (Chicken).